Consider the following 200-residue polypeptide: Small ribosomal subunit protein eS1 (200 aa).

Belongs to the eukaryotic ribosomal protein eS1 family.

The sequence is that of Small ribosomal subunit protein eS1 from Thermococcus sibiricus (strain DSM 12597 / MM 739).